The following is a 95-amino-acid chain: Aspartyl/glutamyl-tRNA(Asn/Gln) amidotransferase subunit C (95 aa).

The protein belongs to the GatC family. In terms of assembly, heterotrimer of A, B and C subunits.

It carries out the reaction L-glutamyl-tRNA(Gln) + L-glutamine + ATP + H2O = L-glutaminyl-tRNA(Gln) + L-glutamate + ADP + phosphate + H(+). The enzyme catalyses L-aspartyl-tRNA(Asn) + L-glutamine + ATP + H2O = L-asparaginyl-tRNA(Asn) + L-glutamate + ADP + phosphate + 2 H(+). Its function is as follows. Allows the formation of correctly charged Asn-tRNA(Asn) or Gln-tRNA(Gln) through the transamidation of misacylated Asp-tRNA(Asn) or Glu-tRNA(Gln) in organisms which lack either or both of asparaginyl-tRNA or glutaminyl-tRNA synthetases. The reaction takes place in the presence of glutamine and ATP through an activated phospho-Asp-tRNA(Asn) or phospho-Glu-tRNA(Gln). This is Aspartyl/glutamyl-tRNA(Asn/Gln) amidotransferase subunit C from Pelagibacter ubique (strain HTCC1062).